Consider the following 145-residue polypeptide: Arginine repressor (145 aa).

The protein belongs to the ArgR family.

The protein localises to the cytoplasm. It participates in amino-acid biosynthesis; L-arginine biosynthesis [regulation]. Regulates arginine biosynthesis genes. In Solibacter usitatus (strain Ellin6076), this protein is Arginine repressor.